A 179-amino-acid polypeptide reads, in one-letter code: Ubiquitin-conjugating enzyme E2 C (179 aa).

The interval 1-31 is disordered; that stretch reads MASQNVDPAAASSVASRKGQESGTSAARGSV. A UBC core domain is found at 30-179; it reads SVGKRLQQEL…YQKQVREKEI (150 aa). Cysteine 114 serves as the catalytic Glycyl thioester intermediate.

This sequence belongs to the ubiquitin-conjugating enzyme family. Component of the APC/C complex. In terms of processing, autoubiquitinated by the APC/C complex, leading to its degradation by the proteasome.

It catalyses the reaction S-ubiquitinyl-[E1 ubiquitin-activating enzyme]-L-cysteine + [E2 ubiquitin-conjugating enzyme]-L-cysteine = [E1 ubiquitin-activating enzyme]-L-cysteine + S-ubiquitinyl-[E2 ubiquitin-conjugating enzyme]-L-cysteine.. The enzyme catalyses S-ubiquitinyl-[E1 ubiquitin-activating enzyme]-L-cysteine + [acceptor protein]-L-lysine = [E1 ubiquitin-activating enzyme]-L-cysteine + N(6)-monoubiquitinyl-[acceptor protein]-L-lysine.. It functions in the pathway protein modification; protein ubiquitination. In terms of biological role, catalyzes the covalent attachment of ubiquitin to other proteins. Acts as an essential factor of the anaphase promoting complex/cyclosome (APC/C), a cell cycle-regulated ubiquitin ligase that controls progression through mitosis. Acts by initiating 'Lys-11'-linked polyubiquitin chains on APC/C substrates, leading to the degradation of APC/C substrates by the proteasome and promoting mitotic exit. This Xenopus laevis (African clawed frog) protein is Ubiquitin-conjugating enzyme E2 C (ube2c).